Here is an 847-residue protein sequence, read N- to C-terminus: Zinc transporter ZIP10 (847 aa).

An N-terminal signal peptide occupies residues 1–26; it reads MMRVHTHTRLCFLCVLTLLYHQCSHC. The interval 136 to 374 is disordered; the sequence is GRHSHSAGHP…RREVPGSPAH (239 aa). Residues 162-171 are compositionally biased toward basic and acidic residues; it reads HHENEEHTLA. Positions 179-188 are enriched in polar residues; that stretch reads TLGTGATPPS. The span at 190–269 shows a compositional bias: basic and acidic residues; that stretch reads SEEHDHDHEH…QEHNDLSDQN (80 aa). 2 stretches are compositionally biased toward basic residues: residues 270–285 and 314–330; these read HHHH…HPHL and TRRH…RGRN. N-linked (GlcNAc...) asparagine glycosylation is present at Asn-385. 3 consecutive transmembrane segments (helical) span residues 447–467, 474–494, and 529–549; these read FVSI…VPIL, FLLT…ALLH, and GLTA…IGMF. The segment at 613-676 is disordered; the sequence is ELQPLDSPSK…HSHHGHCHSD (64 aa). Residues 629 to 646 show a composition bias toward basic and acidic residues; sequence DSDHPYEAPVKTEEDNVP. Residues 648-672 are compositionally biased toward basic residues; it reads AKSKKHGHGHGHGHGHGHGHSHHGH. A run of 4 helical transmembrane segments spans residues 705–725, 750–770, 779–799, and 817–837; these read AIGA…VAVF, IVYN…GTAV, SWIF…DMLP, and FVLQ…IAIF.

Belongs to the ZIP transporter (TC 2.A.5) family. Undergoes N-terminal ectodomain shedding.

The protein localises to the cell membrane. The protein resides in the apical cell membrane. It carries out the reaction Zn(2+)(in) = Zn(2+)(out). In terms of biological role, zinc-influx transporter. When associated with slc39a6, the heterodimer slc39a10/slc39a6 has a functional role in epithelial-mesenchymal transition (EMT) during embryonic development. Slc39a10/slc39a6 heterodimers play also an essentiel role in initiating mitosis by importing zinc into cells to initiate a pathway resulting in the onset of mitosis. When associated with slc39a6, the heterodimer controls Ncam1 phosphorylation and integration into focal adhesion complexes during EMT. The protein is Zinc transporter ZIP10 of Danio rerio (Zebrafish).